The sequence spans 492 residues: Vacuolar fusion protein CCZ1 homolog (492 aa).

Residues 255–275 form a disordered region; it reads SVHAGPTSSSSNGTASVERPL. A compositionally biased stretch (polar residues) spans 260–269; the sequence is PTSSSSNGTA.

It belongs to the CCZ1 family. In terms of assembly, interacts with MON1.

It is found in the endosome. Its subcellular location is the prevacuolar compartment. In terms of biological role, plays an important role in membrane trafficking through the secretory apparatus. In complex with MON1, acts as a guanine exchange factor (GEF) for Rab7 protein family. Promotes the exchange of GDP to GTP, converting it from an inactive GDP-bound form into an active GTP-bound form. The active form is involved in protein trafficking from prevacuolar compartments (PVCs) to vacuoles. May serve as a linker between Rab5 and Rab7 protein families in PVCs and mediate PVC maturation. This Oryza sativa subsp. japonica (Rice) protein is Vacuolar fusion protein CCZ1 homolog.